The primary structure comprises 135 residues: Ribonuclease P protein component (135 aa).

The protein belongs to the RnpA family. As to quaternary structure, consists of a catalytic RNA component (M1 or rnpB) and a protein subunit.

The catalysed reaction is Endonucleolytic cleavage of RNA, removing 5'-extranucleotides from tRNA precursor.. Its function is as follows. RNaseP catalyzes the removal of the 5'-leader sequence from pre-tRNA to produce the mature 5'-terminus. It can also cleave other RNA substrates such as 4.5S RNA. The protein component plays an auxiliary but essential role in vivo by binding to the 5'-leader sequence and broadening the substrate specificity of the ribozyme. This is Ribonuclease P protein component from Pseudomonas paraeruginosa (strain DSM 24068 / PA7) (Pseudomonas aeruginosa (strain PA7)).